Reading from the N-terminus, the 218-residue chain is Ribonuclease HII (218 aa).

In terms of domain architecture, RNase H type-2 spans 22 to 211 (VRIAGVDEAG…VRAALESRFS (190 aa)). Asp-28, Glu-29, and Asp-119 together coordinate a divalent metal cation.

It belongs to the RNase HII family. Mn(2+) is required as a cofactor. The cofactor is Mg(2+).

It is found in the cytoplasm. The catalysed reaction is Endonucleolytic cleavage to 5'-phosphomonoester.. Endonuclease that specifically degrades the RNA of RNA-DNA hybrids. In Maricaulis maris (strain MCS10) (Caulobacter maris), this protein is Ribonuclease HII.